Here is a 474-residue protein sequence, read N- to C-terminus: 3-isopropylmalate dehydratase large subunit (474 aa).

Residues cysteine 353, cysteine 414, and cysteine 417 each coordinate [4Fe-4S] cluster.

Belongs to the aconitase/IPM isomerase family. LeuC type 1 subfamily. In terms of assembly, heterodimer of LeuC and LeuD. [4Fe-4S] cluster serves as cofactor.

It catalyses the reaction (2R,3S)-3-isopropylmalate = (2S)-2-isopropylmalate. It participates in amino-acid biosynthesis; L-leucine biosynthesis; L-leucine from 3-methyl-2-oxobutanoate: step 2/4. Its function is as follows. Catalyzes the isomerization between 2-isopropylmalate and 3-isopropylmalate, via the formation of 2-isopropylmaleate. This chain is 3-isopropylmalate dehydratase large subunit, found in Teredinibacter turnerae (strain ATCC 39867 / T7901).